Consider the following 456-residue polypeptide: Proline-specific permease ProY (456 aa).

Over Met-1 to Arg-17 the chain is Cytoplasmic. Helical transmembrane passes span Phe-18–Lys-38 and Met-39–Met-59. Residues Arg-60 to Tyr-95 are Cytoplasmic-facing. A run of 2 helical transmembrane segments spans residues Cys-96–Val-116 and Trp-117–Ile-137. The Cytoplasmic segment spans residues Asn-138–Lys-156. The helical transmembrane segment at Val-157–Asn-177 threads the bilayer. Topologically, residues Gly-178 to Gly-197 are periplasmic. The chain crosses the membrane as a helical span at residues Trp-198–Ile-218. The Cytoplasmic segment spans residues Gly-219–Arg-242. The helical transmembrane segment at Ile-243–Val-263 threads the bilayer. Over Gly-264–Met-277 the chain is Periplasmic. The helical transmembrane segment at Gly-278–Ile-298 threads the bilayer. Topologically, residues Asn-299–Pro-331 are cytoplasmic. Residues Trp-332–Met-352 traverse the membrane as a helical segment. The Periplasmic segment spans residues Pro-353 to Asn-355. Residues Val-356–Leu-376 traverse the membrane as a helical segment. Residues Leu-377–Pro-399 lie on the Cytoplasmic side of the membrane. The helical transmembrane segment at Gly-400–Gly-420 threads the bilayer. Over Tyr-421–Asp-424 the chain is Periplasmic. The helical transmembrane segment at Thr-425–Phe-445 threads the bilayer. Topologically, residues Lys-446 to Ala-456 are cytoplasmic.

The protein belongs to the amino acid-polyamine-organocation (APC) superfamily. Amino acid transporter (AAT) (TC 2.A.3.1) family.

It localises to the cell inner membrane. Permease that is involved in the transport across the cytoplasmic membrane of proline. This chain is Proline-specific permease ProY (proY), found in Salmonella typhimurium (strain LT2 / SGSC1412 / ATCC 700720).